We begin with the raw amino-acid sequence, 143 residues long: MTAPASLPAPLAEVVSDFAEVQGQDKLRLLLEFANELPALPSHLAESAMEPVPECQSPLFLHVDASDPNRVRLHFSAPAEAPTTRGFASILAAGLDEQPAADILAVPEDFYTELGLAALISPLRLRGMSAMLARIKRRLREAD.

Belongs to the SufE family.

This is an uncharacterized protein from Mycobacterium tuberculosis (strain CDC 1551 / Oshkosh).